Reading from the N-terminus, the 243-residue chain is tRNA (guanine-N(1)-)-methyltransferase (243 aa).

S-adenosyl-L-methionine contacts are provided by residues G111 and 130 to 135 (IGDYVL).

This sequence belongs to the RNA methyltransferase TrmD family. In terms of assembly, homodimer.

Its subcellular location is the cytoplasm. The catalysed reaction is guanosine(37) in tRNA + S-adenosyl-L-methionine = N(1)-methylguanosine(37) in tRNA + S-adenosyl-L-homocysteine + H(+). Its function is as follows. Specifically methylates guanosine-37 in various tRNAs. The chain is tRNA (guanine-N(1)-)-methyltransferase from Acholeplasma laidlawii (strain PG-8A).